The primary structure comprises 223 residues: Cell division protein SepF (223 aa).

The disordered stretch occupies residues 19 to 81 (YDDEYYDDRG…YPPPGGYRGG (63 aa)). Positions 36–69 (PRFEDDYGRYEGRDFEDPRRDPRAGMRADLRGEP) are enriched in basic and acidic residues.

It belongs to the SepF family. Homodimer. Interacts with FtsZ.

The protein localises to the cytoplasm. Functionally, cell division protein that is part of the divisome complex and is recruited early to the Z-ring. Probably stimulates Z-ring formation, perhaps through the cross-linking of FtsZ protofilaments. Its function overlaps with FtsA. This chain is Cell division protein SepF, found in Mycobacterium ulcerans (strain Agy99).